We begin with the raw amino-acid sequence, 314 residues long: MSKFARIIGTGSYLPPTVITNDDLSKTINTTNEWIVARTGIKQRHKVTNETTCDLAEKAANRALEMAGINVKDLDLIILATTTADKIFPATATILQTAIGASCPAFDLQSVCAGFIFALTTAEQYIKASAANKVLVVGSETLSRIVNWNDRSTAVLFGDGAGAVVLSGSDNTGILYSKLFSDGNYLSSLQVSNNYINEVGFIEMSGNEVFKIAVNRLSSLAEKTLKETNLNSNKLDWIVPHQANIRIISAVAKRIKTPMNKVIVTLENHGNTSAASIPLALDTAVRDGRIKRGDHLLFEGIGAGFSWGSILIQF.

Residues C112 and H241 contribute to the active site. Positions 242-246 are ACP-binding; sequence QANIR. The active site involves N271.

The protein belongs to the thiolase-like superfamily. FabH family. As to quaternary structure, homodimer.

The protein resides in the cytoplasm. It carries out the reaction malonyl-[ACP] + acetyl-CoA + H(+) = 3-oxobutanoyl-[ACP] + CO2 + CoA. Its pathway is lipid metabolism; fatty acid biosynthesis. Catalyzes the condensation reaction of fatty acid synthesis by the addition to an acyl acceptor of two carbons from malonyl-ACP. Catalyzes the first condensation reaction which initiates fatty acid synthesis and may therefore play a role in governing the total rate of fatty acid production. Possesses both acetoacetyl-ACP synthase and acetyl transacylase activities. Its substrate specificity determines the biosynthesis of branched-chain and/or straight-chain of fatty acids. This is Beta-ketoacyl-[acyl-carrier-protein] synthase III from Vesicomyosocius okutanii subsp. Calyptogena okutanii (strain HA).